A 223-amino-acid chain; its full sequence is Uracil-DNA glycosylase (223 aa).

D61 functions as the Proton acceptor in the catalytic mechanism.

This sequence belongs to the uracil-DNA glycosylase (UDG) superfamily. UNG family.

It localises to the cytoplasm. It catalyses the reaction Hydrolyzes single-stranded DNA or mismatched double-stranded DNA and polynucleotides, releasing free uracil.. In terms of biological role, excises uracil residues from the DNA which can arise as a result of misincorporation of dUMP residues by DNA polymerase or due to deamination of cytosine. This Histophilus somni (strain 129Pt) (Haemophilus somnus) protein is Uracil-DNA glycosylase.